We begin with the raw amino-acid sequence, 122 residues long: Ribonuclease pancreatic (122 aa).

The span at 1-16 (ETPAEKFQRQHMDTEH) shows a compositional bias: basic and acidic residues. Positions 1–20 (ETPAEKFQRQHMDTEHSTAS) are disordered. Substrate contacts are provided by lysine 6 and arginine 9. Histidine 11 acts as the Proton acceptor in catalysis. 4 disulfides stabilise this stretch: cysteine 25/cysteine 83, cysteine 39/cysteine 94, cysteine 57/cysteine 109, and cysteine 64/cysteine 71. Substrate-binding positions include 40–44 (KPLNT), lysine 65, and arginine 84. The Proton donor role is filled by histidine 117.

This sequence belongs to the pancreatic ribonuclease family. As to quaternary structure, monomer. Interacts with and forms tight 1:1 complexes with RNH1. Dimerization of two such complexes may occur. Interaction with RNH1 inhibits this protein. Not glycosylated although the sequence N-V-T, a recognition site for carbohydrate attachment, is present. Pancreas.

It is found in the secreted. It catalyses the reaction an [RNA] containing cytidine + H2O = an [RNA]-3'-cytidine-3'-phosphate + a 5'-hydroxy-ribonucleotide-3'-[RNA].. It carries out the reaction an [RNA] containing uridine + H2O = an [RNA]-3'-uridine-3'-phosphate + a 5'-hydroxy-ribonucleotide-3'-[RNA].. Its function is as follows. Endonuclease that catalyzes the cleavage of RNA on the 3' side of pyrimidine nucleotides. Acts on single-stranded and double-stranded RNA. The protein is Ribonuclease pancreatic (RNASE1) of Osphranter rufus (Red kangaroo).